The chain runs to 124 residues: Holo-[acyl-carrier-protein] synthase (124 aa).

Mg(2+) is bound by residues D5 and E56.

This sequence belongs to the P-Pant transferase superfamily. AcpS family. It depends on Mg(2+) as a cofactor.

It is found in the cytoplasm. It carries out the reaction apo-[ACP] + CoA = holo-[ACP] + adenosine 3',5'-bisphosphate + H(+). Its function is as follows. Transfers the 4'-phosphopantetheine moiety from coenzyme A to a Ser of acyl-carrier-protein. This Campylobacter hominis (strain ATCC BAA-381 / DSM 21671 / CCUG 45161 / LMG 19568 / NCTC 13146 / CH001A) protein is Holo-[acyl-carrier-protein] synthase.